The primary structure comprises 314 residues: Putative S-adenosyl-L-methionine-dependent methyltransferase MAB_3886c (314 aa).

Residues aspartate 133 and 162-163 (DL) each bind S-adenosyl-L-methionine.

Belongs to the UPF0677 family.

Functionally, exhibits S-adenosyl-L-methionine-dependent methyltransferase activity. The protein is Putative S-adenosyl-L-methionine-dependent methyltransferase MAB_3886c of Mycobacteroides abscessus (strain ATCC 19977 / DSM 44196 / CCUG 20993 / CIP 104536 / JCM 13569 / NCTC 13031 / TMC 1543 / L948) (Mycobacterium abscessus).